Consider the following 524-residue polypeptide: GMP synthase [glutamine-hydrolyzing] (524 aa).

The region spanning 5–195 (KVIVIDFGGQ…VRGVCGCAGT (191 aa)) is the Glutamine amidotransferase type-1 domain. The active-site Nucleophile is Cys-82. Catalysis depends on residues His-169 and Glu-171. Residues 196-389 (WKMDSFVKNT…LGLPDYLVFR (194 aa)) enclose the GMPS ATP-PPase domain. 223 to 229 (SGGVDSS) contributes to the ATP binding site.

In terms of assembly, homodimer.

The catalysed reaction is XMP + L-glutamine + ATP + H2O = GMP + L-glutamate + AMP + diphosphate + 2 H(+). The protein operates within purine metabolism; GMP biosynthesis; GMP from XMP (L-Gln route): step 1/1. Its function is as follows. Catalyzes the synthesis of GMP from XMP. This Agathobacter rectalis (strain ATCC 33656 / DSM 3377 / JCM 17463 / KCTC 5835 / VPI 0990) (Eubacterium rectale) protein is GMP synthase [glutamine-hydrolyzing].